The following is a 183-amino-acid chain: Holliday junction branch migration complex subunit RuvA (183 aa).

Positions 1–63 (MIVGLIGVVE…EDAHLLYGFL (63 aa)) are domain I. A domain II region spans residues 64-139 (EESEKILFER…FFIQDENRPA (76 aa)). Residue alanine 139 is a region of interest, flexible linker. The tract at residues 139 to 183 (ARNEVFLALESLGFKSAEINPVLKTLKPHLSIEAAIKEALQQLRS) is domain III.

This sequence belongs to the RuvA family. In terms of assembly, homotetramer. Forms an RuvA(8)-RuvB(12)-Holliday junction (HJ) complex. HJ DNA is sandwiched between 2 RuvA tetramers; dsDNA enters through RuvA and exits via RuvB. An RuvB hexamer assembles on each DNA strand where it exits the tetramer. Each RuvB hexamer is contacted by two RuvA subunits (via domain III) on 2 adjacent RuvB subunits; this complex drives branch migration. In the full resolvosome a probable DNA-RuvA(4)-RuvB(12)-RuvC(2) complex forms which resolves the HJ.

It is found in the cytoplasm. The RuvA-RuvB-RuvC complex processes Holliday junction (HJ) DNA during genetic recombination and DNA repair, while the RuvA-RuvB complex plays an important role in the rescue of blocked DNA replication forks via replication fork reversal (RFR). RuvA specifically binds to HJ cruciform DNA, conferring on it an open structure. The RuvB hexamer acts as an ATP-dependent pump, pulling dsDNA into and through the RuvAB complex. HJ branch migration allows RuvC to scan DNA until it finds its consensus sequence, where it cleaves and resolves the cruciform DNA. In Helicobacter pylori (strain J99 / ATCC 700824) (Campylobacter pylori J99), this protein is Holliday junction branch migration complex subunit RuvA.